We begin with the raw amino-acid sequence, 175 residues long: Co-chaperone protein daf-41 (175 aa).

Residues 2 to 89 (AKQPTVLWAQ…KTPAWWPRLL (88 aa)) enclose the CS domain. Residues 109-175 (DEDDEAEDAG…EEEGKNGTRA (67 aa)) form a disordered region. The segment covering 148–168 (GLEDDEEDDDMPDLEDNEEEE) has biased composition (acidic residues).

Belongs to the p23/wos2 family. In terms of tissue distribution, expressed in anterior and posterior neurons including ASE, AWC, ASI and ADL amphids and phasmid sensory neurons, peripheral neurons and ventral cord motorneurons. Additionally expressed in body wall muscle, pharynx, vulva, germ cells and intestine.

Co-chaperone for hsp90/daf-21. Involved in regulation of longevity, larval entry and exit from the dauer stage of development and response to environmental cues, such as oxidative stress, in a temperature-dependent manner. Role in daf-16 and hsf-1 inhibition at elevated temperatures. The chain is Co-chaperone protein daf-41 from Caenorhabditis elegans.